A 150-amino-acid chain; its full sequence is D-aminoacyl-tRNA deacylase (150 aa).

Positions 136-137 (GP) match the Gly-cisPro motif, important for rejection of L-amino acids motif.

It belongs to the DTD family. Homodimer.

The protein localises to the cytoplasm. It catalyses the reaction glycyl-tRNA(Ala) + H2O = tRNA(Ala) + glycine + H(+). The enzyme catalyses a D-aminoacyl-tRNA + H2O = a tRNA + a D-alpha-amino acid + H(+). In terms of biological role, an aminoacyl-tRNA editing enzyme that deacylates mischarged D-aminoacyl-tRNAs. Also deacylates mischarged glycyl-tRNA(Ala), protecting cells against glycine mischarging by AlaRS. Acts via tRNA-based rather than protein-based catalysis; rejects L-amino acids rather than detecting D-amino acids in the active site. By recycling D-aminoacyl-tRNA to D-amino acids and free tRNA molecules, this enzyme counteracts the toxicity associated with the formation of D-aminoacyl-tRNA entities in vivo and helps enforce protein L-homochirality. In Staphylococcus aureus (strain MRSA252), this protein is D-aminoacyl-tRNA deacylase.